Reading from the N-terminus, the 562-residue chain is Tryptophan 2-monooxygenase (562 aa).

5 residues coordinate FMN: serine 54, glutamate 74, arginine 76, arginine 82, and arginine 104. Arginine 104 provides a ligand contact to substrate.

The protein belongs to the tryptophan 2-monooxygenase family. The cofactor is FMN.

It catalyses the reaction L-tryptophan + O2 = indole-3-acetamide + CO2 + H2O. It functions in the pathway plant hormone metabolism; auxin biosynthesis. The chain is Tryptophan 2-monooxygenase (iaaM) from Pantoea agglomerans pv. gypsophilae (Erwinia herbicola).